Consider the following 861-residue polypeptide: Protein argonaute-4 (861 aa).

The 120-residue stretch at 219–338 (PIIEFMCEVL…LPLEVCNIVA (120 aa)) folds into the PAZ domain. A Piwi domain is found at 509–820 (LIVVILPGKT…VAFRARYHLV (312 aa)). A disordered region spans residues 825–846 (DSAEGSHVSGQSNGRDPQALAK).

Belongs to the argonaute family. Ago subfamily. In terms of assembly, interacts with EIF4B, IMP8, PRMT5, TNRC6A and TNRC6B. Interacts with ZFP36. Post-translationally, ubiquitinated on surface-exposed lysines by a SCF-like E3 ubiquitin-protein ligase complex containing ZSWIM8 during target-directed microRNA degradation (TDMD), a process that mediates degradation of microRNAs (miRNAs). Ubiquitination by the SCF-like E3 ubiquitin-protein ligase complex containing ZSWIM8 leads to its subsequent degradation, thereby exposing miRNAs for degradation. ZSWIM8 recognizes and binds AGO4 when it is engaged with a TDMD target.

It localises to the cytoplasm. The protein localises to the P-body. In terms of biological role, required for RNA-mediated gene silencing (RNAi). Binds to short RNAs such as microRNAs (miRNAs) and represses the translation of mRNAs which are complementary to them. Lacks endonuclease activity and does not appear to cleave target mRNAs. Also required for RNA-directed transcription and replication of the human hapatitis delta virus (HDV). This Homo sapiens (Human) protein is Protein argonaute-4 (AGO4).